Reading from the N-terminus, the 193-residue chain is Flagellin B1 (193 aa).

Residues 1–12 constitute a propeptide that is removed on maturation; it reads MFEFITDEDERG.

Belongs to the archaeal flagellin family. Post-translationally, glycosylated.

The protein resides in the archaeal flagellum. Flagellin is the subunit protein which polymerizes to form the filaments of archaeal flagella. In Halobacterium salinarum (strain ATCC 700922 / JCM 11081 / NRC-1) (Halobacterium halobium), this protein is Flagellin B1 (flaB1).